A 182-amino-acid chain; its full sequence is ATP synthase subunit delta (182 aa).

This sequence belongs to the ATPase delta chain family. F-type ATPases have 2 components, F(1) - the catalytic core - and F(0) - the membrane proton channel. F(1) has five subunits: alpha(3), beta(3), gamma(1), delta(1), epsilon(1). F(0) has three main subunits: a(1), b(2) and c(10-14). The alpha and beta chains form an alternating ring which encloses part of the gamma chain. F(1) is attached to F(0) by a central stalk formed by the gamma and epsilon chains, while a peripheral stalk is formed by the delta and b chains.

The protein resides in the cell membrane. F(1)F(0) ATP synthase produces ATP from ADP in the presence of a proton or sodium gradient. F-type ATPases consist of two structural domains, F(1) containing the extramembraneous catalytic core and F(0) containing the membrane proton channel, linked together by a central stalk and a peripheral stalk. During catalysis, ATP synthesis in the catalytic domain of F(1) is coupled via a rotary mechanism of the central stalk subunits to proton translocation. Its function is as follows. This protein is part of the stalk that links CF(0) to CF(1). It either transmits conformational changes from CF(0) to CF(1) or is implicated in proton conduction. In Lactobacillus gasseri (strain ATCC 33323 / DSM 20243 / BCRC 14619 / CIP 102991 / JCM 1131 / KCTC 3163 / NCIMB 11718 / NCTC 13722 / AM63), this protein is ATP synthase subunit delta.